Here is a 511-residue protein sequence, read N- to C-terminus: DnaJ homolog 1, mitochondrial (511 aa).

Residues 1-55 (MAFQQGVLSRCSGVFRHHVGHSRHINNILYRHAIAFASIAPRIPKSSFHTSAIRN) constitute a mitochondrion transit peptide. Residues 59-127 (FKDPYDTLGL…RQQYDQFGPA (69 aa)) form the J domain. The CR-type zinc finger occupies 217-297 (SKNVQLRFSA…CHGEGVQVNR (81 aa)). CXXCXGXG motif repeat units follow at residues 230–237 (CSTCSGTG), 247–254 (CSTCHGTG), 269–276 (CPTCNGEG), and 285–292 (CTKCHGEG).

The protein resides in the mitochondrion. Functionally, plays a role in mitochondrial biogenesis and protein folding. This Saccharomyces cerevisiae (strain ATCC 204508 / S288c) (Baker's yeast) protein is DnaJ homolog 1, mitochondrial (MDJ1).